The primary structure comprises 456 residues: Bifunctional protein GlmU (456 aa).

The segment at Met1–Arg229 is pyrophosphorylase. Residues Leu11 to Gly14, Lys25, Gln76, Gly81 to Thr82, Tyr103 to Asp105, Gly140, Glu154, Asn169, and Asn227 contribute to the UDP-N-acetyl-alpha-D-glucosamine site. Residue Asp105 participates in Mg(2+) binding. Residue Asn227 participates in Mg(2+) binding. The linker stretch occupies residues Leu230–Ala250. An N-acetyltransferase region spans residues Gly251–Lys456. UDP-N-acetyl-alpha-D-glucosamine is bound by residues Arg333 and Lys351. Catalysis depends on His363, which acts as the Proton acceptor. UDP-N-acetyl-alpha-D-glucosamine contacts are provided by Tyr366 and Asn377. Acetyl-CoA contacts are provided by residues Ala380, Asn386–Tyr387, Ser405, Ala423, and Arg440.

The protein in the N-terminal section; belongs to the N-acetylglucosamine-1-phosphate uridyltransferase family. It in the C-terminal section; belongs to the transferase hexapeptide repeat family. As to quaternary structure, homotrimer. Requires Mg(2+) as cofactor.

Its subcellular location is the cytoplasm. The catalysed reaction is alpha-D-glucosamine 1-phosphate + acetyl-CoA = N-acetyl-alpha-D-glucosamine 1-phosphate + CoA + H(+). It carries out the reaction N-acetyl-alpha-D-glucosamine 1-phosphate + UTP + H(+) = UDP-N-acetyl-alpha-D-glucosamine + diphosphate. Its pathway is nucleotide-sugar biosynthesis; UDP-N-acetyl-alpha-D-glucosamine biosynthesis; N-acetyl-alpha-D-glucosamine 1-phosphate from alpha-D-glucosamine 6-phosphate (route II): step 2/2. It functions in the pathway nucleotide-sugar biosynthesis; UDP-N-acetyl-alpha-D-glucosamine biosynthesis; UDP-N-acetyl-alpha-D-glucosamine from N-acetyl-alpha-D-glucosamine 1-phosphate: step 1/1. It participates in bacterial outer membrane biogenesis; LPS lipid A biosynthesis. In terms of biological role, catalyzes the last two sequential reactions in the de novo biosynthetic pathway for UDP-N-acetylglucosamine (UDP-GlcNAc). The C-terminal domain catalyzes the transfer of acetyl group from acetyl coenzyme A to glucosamine-1-phosphate (GlcN-1-P) to produce N-acetylglucosamine-1-phosphate (GlcNAc-1-P), which is converted into UDP-GlcNAc by the transfer of uridine 5-monophosphate (from uridine 5-triphosphate), a reaction catalyzed by the N-terminal domain. In Yersinia pseudotuberculosis serotype O:1b (strain IP 31758), this protein is Bifunctional protein GlmU.